The primary structure comprises 439 residues: 3-phosphoshikimate 1-carboxyvinyltransferase (439 aa).

3-phosphoshikimate-binding residues include lysine 21, serine 22, and arginine 26. Lysine 21 is a phosphoenolpyruvate binding site. Residues glycine 94 and arginine 122 each contribute to the phosphoenolpyruvate site. 3-phosphoshikimate is bound by residues serine 167, glutamine 169, aspartate 320, and lysine 347. Glutamine 169 contacts phosphoenolpyruvate. Residue aspartate 320 is the Proton acceptor of the active site. The phosphoenolpyruvate site is built by arginine 351 and arginine 395.

Belongs to the EPSP synthase family. In terms of assembly, monomer.

Its subcellular location is the cytoplasm. The enzyme catalyses 3-phosphoshikimate + phosphoenolpyruvate = 5-O-(1-carboxyvinyl)-3-phosphoshikimate + phosphate. It participates in metabolic intermediate biosynthesis; chorismate biosynthesis; chorismate from D-erythrose 4-phosphate and phosphoenolpyruvate: step 6/7. In terms of biological role, catalyzes the transfer of the enolpyruvyl moiety of phosphoenolpyruvate (PEP) to the 5-hydroxyl of shikimate-3-phosphate (S3P) to produce enolpyruvyl shikimate-3-phosphate and inorganic phosphate. This is 3-phosphoshikimate 1-carboxyvinyltransferase from Hyphomonas neptunium (strain ATCC 15444).